A 213-amino-acid polypeptide reads, in one-letter code: Large ribosomal subunit protein uL1 (213 aa).

It belongs to the universal ribosomal protein uL1 family. Part of the 50S ribosomal subunit.

Functionally, probably involved in E site tRNA release. Binds directly to 23S rRNA. In terms of biological role, protein L1 is also a translational repressor protein, it controls the translation of its operon by binding to its mRNA. This is Large ribosomal subunit protein uL1 from Methanothermococcus thermolithotrophicus (Methanococcus thermolithotrophicus).